Consider the following 1411-residue polypeptide: DNA-directed RNA polymerase subunit beta' (1411 aa).

4 residues coordinate Zn(2+): C70, C72, C85, and C88. Positions 460, 462, and 464 each coordinate Mg(2+). Positions 814, 888, 895, and 898 each coordinate Zn(2+).

Belongs to the RNA polymerase beta' chain family. In terms of assembly, the RNAP catalytic core consists of 2 alpha, 1 beta, 1 beta' and 1 omega subunit. When a sigma factor is associated with the core the holoenzyme is formed, which can initiate transcription. Mg(2+) is required as a cofactor. The cofactor is Zn(2+).

It catalyses the reaction RNA(n) + a ribonucleoside 5'-triphosphate = RNA(n+1) + diphosphate. DNA-dependent RNA polymerase catalyzes the transcription of DNA into RNA using the four ribonucleoside triphosphates as substrates. The polypeptide is DNA-directed RNA polymerase subunit beta' (Idiomarina loihiensis (strain ATCC BAA-735 / DSM 15497 / L2-TR)).